A 338-amino-acid chain; its full sequence is Tryptophan--tRNA ligase (338 aa).

Residues 11 to 13 (QPS) and 19 to 20 (GN) contribute to the ATP site. The 'HIGH' region motif lies at 12-20 (PSGELSIGN). Residue Asp135 coordinates L-tryptophan. Residues 147–149 (GSD), Val189, and 198–202 (KMSKS) contribute to the ATP site. A 'KMSKS' region motif is present at residues 198–202 (KMSKS).

This sequence belongs to the class-I aminoacyl-tRNA synthetase family. As to quaternary structure, homodimer.

The protein resides in the cytoplasm. It catalyses the reaction tRNA(Trp) + L-tryptophan + ATP = L-tryptophyl-tRNA(Trp) + AMP + diphosphate + H(+). Functionally, catalyzes the attachment of tryptophan to tRNA(Trp). The sequence is that of Tryptophan--tRNA ligase from Vibrio vulnificus (strain CMCP6).